We begin with the raw amino-acid sequence, 472 residues long: MRSSVLSLHPDRLLPADPGTRAIARRLYAQVATLPIISPHGHTDPAWFATNAPFANATELLLVPDHYVFRMLYSQGIDLDALGIPRADGTRATVDPRAAWRVFAEHYTLLRGTPSALWLNHVFHDVFDLRIRLDAGTADHYYDHITAALQTPAFLPRALFERFNIEVIATTESPLDRLQHHAAIAASGWQGRVVTAYRPDPVVDPEHEQFAGALQQFGALTGEDVLTWDGYLRAHRQRRAFFAAHGATSTDHGHPSAATADLSPAEAQRLFDTVVRGAATPEQAELFRAQVLTEMAAMSLDDGLVMQLHPGCFRNHNRQLFEQYGRDKGADIPMRTDYVHALKPLLDRHGNDPRLRLIVFTLDETSYSRELAPLAGHYPSLLLGPAWWFHDAPEGMWRFREQTLASAGFYNTVGFNDDTRAFLSIPARHDVARRVDSAFLAKLVAEHRLEEDEATEVAIDLAYRLPKQAYKL.

The protein belongs to the metallo-dependent hydrolases superfamily. Uronate isomerase family.

It catalyses the reaction D-glucuronate = D-fructuronate. It carries out the reaction aldehydo-D-galacturonate = keto-D-tagaturonate. It participates in carbohydrate metabolism; pentose and glucuronate interconversion. This is Uronate isomerase from Xanthomonas axonopodis pv. citri (strain 306).